Consider the following 252-residue polypeptide: Uridylate kinase (252 aa).

20-23 (KLSG) lines the ATP pocket. Residues 28–33 (GGGGLG) form an involved in allosteric activation by GTP region. A UMP-binding site is contributed by G62. ATP contacts are provided by G63 and R67. UMP is bound by residues D82 and 143-150 (MGMPYFST). ATP-binding residues include N171, Y177, and D180.

Belongs to the UMP kinase family. As to quaternary structure, homohexamer.

Its subcellular location is the cytoplasm. It catalyses the reaction UMP + ATP = UDP + ADP. It functions in the pathway pyrimidine metabolism; CTP biosynthesis via de novo pathway; UDP from UMP (UMPK route): step 1/1. Allosterically activated by GTP. Inhibited by UTP. In terms of biological role, catalyzes the reversible phosphorylation of UMP to UDP. The sequence is that of Uridylate kinase from Streptomyces avermitilis (strain ATCC 31267 / DSM 46492 / JCM 5070 / NBRC 14893 / NCIMB 12804 / NRRL 8165 / MA-4680).